The chain runs to 539 residues: GMP synthase [glutamine-hydrolyzing] (539 aa).

Residues 20–215 (TILILDFGSQ…AIEICHAKPN (196 aa)) enclose the Glutamine amidotransferase type-1 domain. Cys96 (nucleophile) is an active-site residue. Active-site residues include His189 and Glu191. The region spanning 216-413 (WSMENFVDKE…LGIEHSLVWR (198 aa)) is the GMPS ATP-PPase domain. An ATP-binding site is contributed by 244 to 250 (SGGVDST). 4 residues coordinate XMP: Arg317, Asp475, Lys531, and Glu537.

In terms of assembly, homodimer. It depends on Mg(2+) as a cofactor.

The protein localises to the cytoplasm. It localises to the cytosol. The catalysed reaction is XMP + L-glutamine + ATP + H2O = GMP + L-glutamate + AMP + diphosphate + 2 H(+). Its pathway is purine metabolism; GMP biosynthesis; GMP from XMP (L-Gln route): step 1/1. Its function is as follows. Catalyzes the conversion of xanthine monophosphate (XMP) to GMP in the presence of glutamine and ATP through an adenyl-XMP intermediate. This chain is GMP synthase [glutamine-hydrolyzing], found in Schizosaccharomyces pombe (strain 972 / ATCC 24843) (Fission yeast).